The sequence spans 642 residues: Chaperone protein DnaK (642 aa).

Thr200 bears the Phosphothreonine; by autocatalysis mark. Residues 603–623 are compositionally biased toward low complexity; it reads AAAAEQGGNADAASGNAQASK. The disordered stretch occupies residues 603-627; that stretch reads AAAAEQGGNADAASGNAQASKAADD.

It belongs to the heat shock protein 70 family.

Its function is as follows. Acts as a chaperone. In Xanthomonas campestris pv. campestris (strain B100), this protein is Chaperone protein DnaK.